The primary structure comprises 240 residues: Urease accessory protein UreF (240 aa).

It belongs to the UreF family. UreD, UreF and UreG form a complex that acts as a GTP-hydrolysis-dependent molecular chaperone, activating the urease apoprotein by helping to assemble the nickel containing metallocenter of UreC. The UreE protein probably delivers the nickel.

The protein localises to the cytoplasm. Required for maturation of urease via the functional incorporation of the urease nickel metallocenter. The sequence is that of Urease accessory protein UreF from Bradyrhizobium sp. (strain ORS 278).